We begin with the raw amino-acid sequence, 591 residues long: DEAD-box ATP-dependent RNA helicase 17 (591 aa).

Residues 23-52 (CSFTDLGLHPTLCAHLQDKMGFQAPTRIQA) carry the Q motif motif. In terms of domain architecture, Helicase ATP-binding spans 55-248 (IPVAMSGQHM…KISLKNPVMI (194 aa)). Position 68-75 (68-75 (AATGTGKT)) interacts with ATP. Residues 181–184 (DEAD) carry the DEAD box motif. The Helicase C-terminal domain maps to 293-482 (QLVQRYVKVS…SFPVNGQRLH (190 aa)). A disordered region spans residues 562-591 (GRSHQVQLKKRKKEQKRERPAKRRKIPAKR). A compositionally biased stretch (basic residues) spans 568–591 (QLKKRKKEQKRERPAKRRKIPAKR).

Belongs to the DEAD box helicase family. DDX31/DBP7 subfamily. As to expression, expressed in flowers and pollen grains.

It is found in the nucleus. It carries out the reaction ATP + H2O = ADP + phosphate + H(+). In terms of biological role, may play a role in organellar ribosome biogenesis and suppress 16S rRNA maturation. This Oryza sativa subsp. japonica (Rice) protein is DEAD-box ATP-dependent RNA helicase 17.